The primary structure comprises 136 residues: Nucleoside diphosphate kinase (136 aa).

Residues Lys-9, Phe-57, Arg-85, Thr-91, Arg-102, and Asn-112 each coordinate ATP. Residue His-115 is the Pros-phosphohistidine intermediate of the active site.

The protein belongs to the NDK family. In terms of assembly, homotetramer. Requires Mg(2+) as cofactor.

It localises to the cytoplasm. It carries out the reaction a 2'-deoxyribonucleoside 5'-diphosphate + ATP = a 2'-deoxyribonucleoside 5'-triphosphate + ADP. The enzyme catalyses a ribonucleoside 5'-diphosphate + ATP = a ribonucleoside 5'-triphosphate + ADP. In terms of biological role, major role in the synthesis of nucleoside triphosphates other than ATP. The ATP gamma phosphate is transferred to the NDP beta phosphate via a ping-pong mechanism, using a phosphorylated active-site intermediate. This chain is Nucleoside diphosphate kinase, found in Acetivibrio thermocellus (strain ATCC 27405 / DSM 1237 / JCM 9322 / NBRC 103400 / NCIMB 10682 / NRRL B-4536 / VPI 7372) (Clostridium thermocellum).